A 358-amino-acid polypeptide reads, in one-letter code: Protein Wnt-8b (358 aa).

A signal peptide spans 1–23 (MFMHLEVYYYAFILMAHMKTCCG). Cysteine 55 and cysteine 66 form a disulfide bridge. The N-linked (GlcNAc...) asparagine glycan is linked to asparagine 104. Intrachain disulfides connect cysteine 105-cysteine 113, cysteine 115-cysteine 133, cysteine 181-cysteine 195, cysteine 183-cysteine 190, cysteine 257-cysteine 295, cysteine 273-cysteine 288, cysteine 292-cysteine 334, cysteine 310-cysteine 325, cysteine 312-cysteine 322, and cysteine 317-cysteine 318. Residue serine 187 is the site of O-palmitoleoyl serine attachment. 2 N-linked (GlcNAc...) asparagine glycosylation sites follow: asparagine 260 and asparagine 279. An N-linked (GlcNAc...) asparagine glycan is attached at asparagine 345.

Belongs to the Wnt family. In terms of processing, palmitoleoylation is required for efficient binding to frizzled receptors. Depalmitoleoylation leads to Wnt signaling pathway inhibition. Proteolytic processing by tiki1 and tiki2 promotes oxidation and formation of large disulfide-bond oligomers, leading to inactivation of wnt8b. As to expression, hindbrain r1, 2 and 5.

It localises to the secreted. Its subcellular location is the extracellular space. The protein localises to the extracellular matrix. Ligand for fzd8a, a member of the G-protein coupled frizzled receptor family. May play a role in the establishment of polarity in the nervous system. Involved in canonical Wnt signaling pathway. During embryonic development, required for the acquisition of caudal diencephalic fate. Antagonizes eye specification. This chain is Protein Wnt-8b (wnt8b), found in Danio rerio (Zebrafish).